The chain runs to 380 residues: NADPH quinone oxidoreductase (380 aa).

A mitochondrion-targeting transit peptide spans 1–17 (MSSFLSKRFISTTQRAM).

The protein belongs to the zinc-containing alcohol dehydrogenase family. Quinone oxidoreductase subfamily. Homodimer.

The protein localises to the mitochondrion. It catalyses the reaction a quinone + NADH + H(+) = a quinol + NAD(+). It carries out the reaction a quinone + NADPH + H(+) = a quinol + NADP(+). NADPH quinone oxidoreductase that efficiently reduces 1,4-benzoquinone, whereas no activities are found for menadiones and methoxyquinones. The polypeptide is NADPH quinone oxidoreductase (Kluyveromyces marxianus (Yeast)).